A 198-amino-acid polypeptide reads, in one-letter code: Na(+)-translocating NADH-quinone reductase subunit E (198 aa).

The next 6 helical transmembrane spans lie at 11-31 (SVFIENMALSFFLGMCTFLAV), 35-55 (VSTAFGLGIAVIVVLGIAVPV), 77-97 (FLNFITFIGVIAALVQILEMV), 110-130 (GIFLPLITVNCAIFGGVSFMV), 140-160 (VVYGIGAGTGWMLAIVALAGI), and 176-196 (LGITFITVGLMALGFMSFSGI).

This sequence belongs to the NqrDE/RnfAE family. As to quaternary structure, composed of six subunits; NqrA, NqrB, NqrC, NqrD, NqrE and NqrF.

It is found in the cell inner membrane. It catalyses the reaction a ubiquinone + n Na(+)(in) + NADH + H(+) = a ubiquinol + n Na(+)(out) + NAD(+). Functionally, NQR complex catalyzes the reduction of ubiquinone-1 to ubiquinol by two successive reactions, coupled with the transport of Na(+) ions from the cytoplasm to the periplasm. NqrA to NqrE are probably involved in the second step, the conversion of ubisemiquinone to ubiquinol. In Pasteurella multocida (strain Pm70), this protein is Na(+)-translocating NADH-quinone reductase subunit E.